The following is a 383-amino-acid chain: Cathepsin D (383 aa).

The signal sequence occupies residues 1-18; sequence MKLLILTLFLATIVLAQA. The propeptide occupies 19-48; that stretch reads LTVPLNFHQASRESRRRVPQKWSNRLSALN. The Peptidase A1 domain maps to 63–378; that stretch reads YYGAITIGTP…DFGNKQVGFA (316 aa). Asp-81 is a catalytic residue. Cys-94 and Cys-101 are oxidised to a cystine. N-linked (GlcNAc...) asparagine glycans are attached at residues Asn-118 and Asn-238. Cys-259 and Cys-263 are joined by a disulfide. Asp-268 is a catalytic residue. A disulfide bridge connects residues Cys-302 and Cys-339. Asn-310 carries N-linked (GlcNAc...) asparagine glycosylation.

The protein belongs to the peptidase A1 family. In terms of assembly, monomer. Post-translationally, N-glycosylated on 2 out of the 3 potential sites. Glycans contain sulfated Mannose.

The protein resides in the lysosome. The protein localises to the secreted. The enzyme catalyses Specificity similar to, but narrower than, that of pepsin A. Does not cleave the 4-Gln-|-His-5 bond in B chain of insulin.. In terms of biological role, protease that may act during cell growth and/or development. This is Cathepsin D (ctsD) from Dictyostelium discoideum (Social amoeba).